We begin with the raw amino-acid sequence, 984 residues long: MORC family CW-type zinc finger protein 1 (984 aa).

Positions 284–353 (AFKDEVKKAE…RELKTARTLS (70 aa)) form a coiled coil. The CW-type zinc-finger motif lies at 477-531 (AMGIPFIIQCDLCLKWRVLPSSTNYQEKEFFDIWICANNPNRLENSCHQVECLPS). Positions 486, 489, 512, and 523 each coordinate Zn(2+). Coiled coils occupy residues 737–761 (DVSL…CNDV) and 900–934 (EISL…LQLG).

The protein localises to the nucleus. In terms of biological role, required for spermatogenesis. Essential for de novo DNA methylation and silencing of transposable elements in the male embryonic germ cells. The protein is MORC family CW-type zinc finger protein 1 of Homo sapiens (Human).